Reading from the N-terminus, the 194-residue chain is CASP-like protein 2C1 (194 aa).

Residues 1-18 (MSSYMEAAAAARAAEAKT) lie on the Cytoplasmic side of the membrane. Residues 19–39 (EGLLRGACALLAAAAALLVGL) traverse the membrane as a helical segment. Residues 40–59 (NTQTETVLFIRKKATVKDVQ) lie on the Extracellular side of the membrane. The chain crosses the membrane as a helical span at residues 60 to 80 (ALWVLAMAAAAAAGYHLLQLL). Residues 81–109 (RCFYLSRFADGKPCRHRRAIAWLCFLLDK) lie on the Cytoplasmic side of the membrane. A helical transmembrane segment spans residues 110–130 (GCAYITFATTVAAAQACVVAL). At 131–151 (YGTHALQWTKLCNIYTRFCEQ) the chain is on the extracellular side. Residues 152-172 (VAGSLVCAMLAAVGTALLSVV) traverse the membrane as a helical segment. Residues 173 to 194 (SARNLFRLYPSMLSPPPSSFVG) are Cytoplasmic-facing.

This sequence belongs to the Casparian strip membrane proteins (CASP) family. Homodimer and heterodimers.

The protein resides in the cell membrane. The sequence is that of CASP-like protein 2C1 from Oryza sativa subsp. japonica (Rice).